The primary structure comprises 344 residues: UPF0283 membrane protein YcjF (344 aa).

A run of 3 helical transmembrane segments spans residues 70 to 90 (MVMGGLALFGASVVGQGVQWT), 100 to 120 (VALGGCAAGALIIGAGVGSVV), and 213 to 233 (ESTLMIAVSPLALVDMAFIAW).

It belongs to the UPF0283 family.

It localises to the cell inner membrane. This is UPF0283 membrane protein YcjF from Shigella dysenteriae serotype 1 (strain Sd197).